The chain runs to 416 residues: CCA-adding enzyme (416 aa).

Positions 42 and 45 each coordinate ATP. 2 residues coordinate CTP: Ser42 and Lys45. Mg(2+) is bound by residues Asp54, Asp56, and Asp107. ATP-binding residues include His130, Lys150, and Tyr159. CTP is bound by residues His130, Lys150, and Tyr159.

Belongs to the tRNA nucleotidyltransferase/poly(A) polymerase family. Archaeal CCA-adding enzyme subfamily. As to quaternary structure, homodimer. Mg(2+) is required as a cofactor.

It carries out the reaction a tRNA precursor + 2 CTP + ATP = a tRNA with a 3' CCA end + 3 diphosphate. The enzyme catalyses a tRNA with a 3' CCA end + 2 CTP + ATP = a tRNA with a 3' CCACCA end + 3 diphosphate. Functionally, catalyzes the addition and repair of the essential 3'-terminal CCA sequence in tRNAs without using a nucleic acid template. Adds these three nucleotides in the order of C, C, and A to the tRNA nucleotide-73, using CTP and ATP as substrates and producing inorganic pyrophosphate. tRNA 3'-terminal CCA addition is required both for tRNA processing and repair. Also involved in tRNA surveillance by mediating tandem CCA addition to generate a CCACCA at the 3' terminus of unstable tRNAs. While stable tRNAs receive only 3'-terminal CCA, unstable tRNAs are marked with CCACCA and rapidly degraded. The polypeptide is CCA-adding enzyme (Sulfolobus acidocaldarius (strain ATCC 33909 / DSM 639 / JCM 8929 / NBRC 15157 / NCIMB 11770)).